The following is a 21-amino-acid chain: Helicopsin (21 aa).

Belongs to the CRISP family. Contains 8 disulfide bonds. Expressed by the salivary gland.

The protein resides in the secreted. Its function is as follows. Helicopsin exhibits robust neurotoxic activity as shown by immediate death (about 8 minutes) of mice due to respiratory paralysis. The chain is Helicopsin from Helicops angulatus (South American water snake).